Reading from the N-terminus, the 78-residue chain is Large ribosomal subunit protein bL28 (78 aa).

The tract at residues methionine 1–arginine 28 is disordered.

This sequence belongs to the bacterial ribosomal protein bL28 family.

This chain is Large ribosomal subunit protein bL28, found in Corynebacterium urealyticum (strain ATCC 43042 / DSM 7109).